A 1470-amino-acid chain; its full sequence is Isonitrile lipopeptide synthase (1470 aa).

The tract at residues 584–603 is disordered; that stretch reads PEPESQEAARPTAPAPTAPA. Residues 974-1049 enclose the Carrier domain; the sequence is AHDSTLERTI…ELARFLKQQE (76 aa). Ser1009 carries the post-translational modification O-(pantetheine 4'-phosphoryl)serine. Residues 1049–1059 are compositionally biased toward low complexity; it reads EQQAHAQVQPR. The tract at residues 1049–1070 is disordered; sequence EQQAHAQVQPRPAGPGLPPTLL.

Belongs to the ATP-dependent AMP-binding enzyme family. Pantetheine 4'-phosphate is required as a cofactor.

The catalysed reaction is 2 a (3R)-3-isocyanyl-fatty acyl-[ACP] + L-lysine + ATP + 2 NADPH = an isonitrile lipopeptide + 2 holo-[ACP] + AMP + diphosphate + 2 NADP(+). It carries out the reaction 2 (3R)-3-isocyanylbutanoyl-[ACP] + L-lysine + ATP + 2 NADPH = (2S)-2,6-bis[(3R)-3-isocyanobutanamido]hexan-1-ol + 2 holo-[ACP] + AMP + diphosphate + 2 NADP(+). Nonribosomal peptide synthetase (NRPS) involved in the biosynthesis of a unique class of isonitrile lipopeptides (INLPs). Catalyzes the final step in the pathway, i.e. the condensation of a (3R)-3-isocyanyl-fatty acyl-[ACP] to both amino groups of a lysine, producing isonitrile lipopeptides. Can use (3R)-3-isocyanylbutanoyl-[ACP] as substrate, leading to (2S)-2,6-bis[(3R)-3-isocyanobutanamido]hexan-1-ol. The protein is Isonitrile lipopeptide synthase of Streptomyces coeruleorubidus.